Reading from the N-terminus, the 444-residue chain is Protein kinase C and casein kinase substrate in neurons protein 1 (444 aa).

2 positions are modified to phosphoserine: serine 2 and serine 79. In terms of domain architecture, F-BAR spans 13–283 (EETTDSFWEV…AIRGADAQED (271 aa)). Residues 26-275 (KRTVKRIDDG…HVYRELEQAI (250 aa)) are a coiled coil. Disordered regions lie at residues 175–194 (MNSK…LQDK) and 309–386 (LPHT…DDSK). Threonine 184 carries the post-translational modification Phosphothreonine. Residues 314–324 (TKKEKQPKKAE) show a composition bias toward basic and acidic residues. The span at 329–351 (TNATGAVESTSQAGDRGSVSSYD) shows a compositional bias: polar residues. Serine 346, serine 348, serine 349, serine 361, and serine 365 each carry phosphoserine. The SH3 domain occupies 385-444 (SKGVRVRALYDYDGQEQDELSFKAGDELTKLGEEDEQGWCRGRLDSGQLGLYPANYVEAI). Residue tyrosine 394 is modified to Phosphotyrosine. Residues serine 405 and serine 430 each carry the phosphoserine modification.

The protein belongs to the PACSIN family. In terms of assembly, may form heterooligomers with other PACSINs. Interacts with MAPT. Interacts with TRPV4. Interacts (via SH3 domain) with SYNJ1 and WASL. Interacts with DNM2 and DNM3. Interacts with both COBL and DBNL. Identified in a complex composed of COBL, PACSIN1 and WASL. Interacts with EHD1 and EHD3. Homodimer. Interacts (via SH3 domain) with DNM1; the interaction is reduced by DNM1 phosphorylation. Post-translationally, phosphorylated by casein kinase 2 (CK2) and protein kinase C (PKC). In terms of tissue distribution, highly expressed in brain and, at much lower levels, in heart and pancreas.

It localises to the cytoplasm. Its subcellular location is the cell projection. It is found in the synapse. The protein resides in the synaptosome. The protein localises to the ruffle membrane. It localises to the membrane. Its subcellular location is the cytoplasmic vesicle membrane. It is found in the cytosol. The protein resides in the cell membrane. Functionally, plays a role in the reorganization of the microtubule cytoskeleton via its interaction with MAPT; this decreases microtubule stability and inhibits MAPT-induced microtubule polymerization. Plays a role in cellular transport processes by recruiting DNM1, DNM2 and DNM3 to membranes. Plays a role in the reorganization of the actin cytoskeleton and in neuron morphogenesis via its interaction with COBL and WASL, and by recruiting COBL to the cell cortex. Plays a role in the regulation of neurite formation, neurite branching and the regulation of neurite length. Required for normal synaptic vesicle endocytosis; this process retrieves previously released neurotransmitters to accommodate multiple cycles of neurotransmission. Required for normal excitatory and inhibitory synaptic transmission. Binds to membranes via its F-BAR domain and mediates membrane tubulation. This is Protein kinase C and casein kinase substrate in neurons protein 1 (PACSIN1) from Homo sapiens (Human).